Reading from the N-terminus, the 275-residue chain is MKSIIDVKNLSFRYKENQNYYDVKDITFHVKRGEWLSIVGHNGSGKSTTVRLIDGLLEAESGEIVIDGQRLTEENVWNIRRQIGMVFQNPDNQFVGATVEDDVAFGLENQGLSRQEMKKRVEEALALVGMLDFKKREPARLSGGQKQRVAIAGVVALRPAILILDEATSMLDPEGRRELIGTVKGIRKDYDMTVISITHDLEEVAMSDRVLVMKKGEIESTSSPRELFSRNDLDQIGLDDPFANQLKKSLSQNGYDLPENYLTESELEDKLWELL.

An ABC transporter domain is found at 5–240 (IDVKNLSFRY…NDLDQIGLDD (236 aa)). 40–47 (GHNGSGKS) contributes to the ATP binding site.

The protein belongs to the ABC transporter superfamily. Energy-coupling factor EcfA family. As to quaternary structure, forms a stable energy-coupling factor (ECF) transporter complex composed of 2 membrane-embedded substrate-binding proteins (S component), 2 ATP-binding proteins (A component) and 2 transmembrane proteins (T component).

Its subcellular location is the cell membrane. Its function is as follows. ATP-binding (A) component of a common energy-coupling factor (ECF) ABC-transporter complex. Unlike classic ABC transporters this ECF transporter provides the energy necessary to transport a number of different substrates. In Streptococcus pneumoniae serotype 4 (strain ATCC BAA-334 / TIGR4), this protein is Energy-coupling factor transporter ATP-binding protein EcfA1.